We begin with the raw amino-acid sequence, 249 residues long: Low affinity immunoglobulin gamma Fc region receptor III-A (249 aa).

An N-terminal signal peptide occupies residues 1 to 20 (MWQLLLPTALVLTAFSGIQA). Residues 21 to 203 (GLQKAVVNLD…SPSMFPPWHQ (183 aa)) lie on the Extracellular side of the membrane. 2 Ig-like C2-type domains span residues 22–102 (LQKA…VQLE) and 119–188 (EGDP…FRIS). 2 disulfide bridges follow: Cys-46–Cys-88 and Cys-127–Cys-171. Asn-62, Asn-164, and Asn-179 each carry an N-linked (GlcNAc...) asparagine glycan. Residues 204-224 (ITFCLLIGLLFAIDTVLYFSV) traverse the membrane as a helical segment. Residues 225–249 (RRGLQSPVADYEEPKIQWSKEPQDK) are Cytoplasmic-facing. Position 235 is a phosphotyrosine (Tyr-235).

In terms of assembly, forms a heterooligomeric complex with ITAM-containing signaling subunits FCER1G. Interacts (via transmembrane domain) with signaling subunits; this interaction is a prerequisite for receptor complex expression on the cell surface and intracellular signal transduction. Binds the Fc region of antigen-complexed IgG. N-glycosylated. In terms of processing, phosphorylated following receptor ligation. Detected on myeloid cells, peripheral blood monocytes, splenic and bone marrow dendritic cells, and thioglycollate-elicited macrophages and neutrophils but absent from lymphoid populations with no expression observed on T cells, B cells, NK cells or other granulocytes (at protein level). Expressed in peripheral blood leukocytes, spleen, liver, thymus and small intestine. Expressed in splenic dendritic cell subsets (at protein level).

It localises to the cell membrane. Its function is as follows. Receptor for the invariable Fc fragment of immunoglobulin gamma (IgG). Binds with intermediate affinity to both IgG2a and IgG2b. Can bind to IgG2a and IgG2b monomers. Does not display binding to IgG1 or IgG3. Recognizes neutralizing virus-specific IgGs displayed on the cell surface of infected cells and triggers antibody-dependent cellular cytotoxicity (ADCC). Confers protection to lethal influenza virus infection. On splenic dendritic cells, uptakes antigen immune complexes and efficiently divert them into MHC class I and II antigen presentation pathways to provide for superior priming of CD4-positive and CD8-positive T cell immune responses. Mediates neutrophil activation by IgG complexes redundantly with FCGR2A. Plays a role in promoting bone resorption by enhancing osteoclast differentiation following binding to IgG2a. Also acts as a receptor for the Fc region of immunoglobulin epsilon (IgE). Binds with low affinity to both the a and b allotypes of IgE. Has also been shown to bind to IgE allotype a only but not to allotype b. Binds aggregated IgE but not the monomeric form and bound monomeric IgG is readily displaced by IgE complexes. Binding to IgE promotes macrophage-mediated phagocytosis, antigen presentation to T cells, production of pro-inflammatory cytokines and the late phase of cutaneous allergic reactions. Mediates enhanced ADCC in response to afucosylated IgGs. The protein is Low affinity immunoglobulin gamma Fc region receptor III-A of Mus musculus (Mouse).